The following is a 72-amino-acid chain: UPF0352 protein HI_0840 (72 aa).

Belongs to the UPF0352 family.

The polypeptide is UPF0352 protein HI_0840 (Haemophilus influenzae (strain ATCC 51907 / DSM 11121 / KW20 / Rd)).